The sequence spans 382 residues: MTEFWLISAPGEKTCQQTWEKLHAATTKNNNLAVSSKFNIPDLKVGTLDVLVGLSDELAKLDAFVEGVVKKVAQYMADVLEDSKDKVQENLLASGVDLVTYITRFQWDMAKYPIKQSLKNISEIIAKGVTQIDNDLKSRASAYNNLKGNLQNLERKNAGSLLTRSLAEIVKKDDFVLDSEYLVTLLVVVPKLNHNDWIKQYETLAEMVVPRSSNVLSEDQDSYLCNVTLFRKAVDDFRHKARENKFIVRDFQYNEEEMKADKEEMTRLSTDKKKQFGPLVRWLKVNFSEAFIAWIHIKALRVFVESVLRYGLPVNFQAMLLQPNKKSVKKLREVLHELYKHLDSSAAAIIDAPMDIPGLNLSQQEYYPYVYYKIDCNLLEFK.

T2 carries the post-translational modification N-acetylthreonine.

Belongs to the V-ATPase C subunit family. V-ATPase is a heteromultimeric enzyme made up of two complexes: the ATP-hydrolytic V1 complex and the proton translocation V0 complex. The V1 complex consists of three catalytic AB heterodimers that form a heterohexamer, three peripheral stalks each consisting of EG heterodimers, one central rotor including subunits D and F, and the regulatory subunits C and H. The proton translocation complex V0 consists of the proton transport subunit a, a ring of proteolipid subunits c9c'', rotary subunit d, subunits e and f, and the accessory subunits ATP6AP1/Ac45 and ATP6AP2/PRR. Ubiquitous. Abundant in brain, liver, kidney and testis.

It localises to the cytoplasmic vesicle. The protein localises to the secretory vesicle. It is found in the synaptic vesicle membrane. The protein resides in the clathrin-coated vesicle membrane. Functionally, subunit of the V1 complex of vacuolar(H+)-ATPase (V-ATPase), a multisubunit enzyme composed of a peripheral complex (V1) that hydrolyzes ATP and a membrane integral complex (V0) that translocates protons. V-ATPase is responsible for acidifying and maintaining the pH of intracellular compartments and in some cell types, is targeted to the plasma membrane, where it is responsible for acidifying the extracellular environment. Subunit C is necessary for the assembly of the catalytic sector of the enzyme and is likely to have a specific function in its catalytic activity. This is V-type proton ATPase subunit C 1 (Atp6v1c1) from Mus musculus (Mouse).